We begin with the raw amino-acid sequence, 182 residues long: MKEKEIQENMNKSIEATQRNFNTIRTGRANASLLDRVSVEYYGAETPIKSLATISTVDSQTISIQPFDISCLQAIEKSISMSDLGITPNNDGKVIRINVPPLTEERRKEFCKLASKYAEEGKVALRNIRRDAVDKEKKDEKDGLISIDESRDNQSEIQKITDKYIALIETKLSEKEKEILKV.

This sequence belongs to the RRF family.

The protein localises to the cytoplasm. Its function is as follows. Responsible for the release of ribosomes from messenger RNA at the termination of protein biosynthesis. May increase the efficiency of translation by recycling ribosomes from one round of translation to another. This chain is Ribosome-recycling factor, found in Prochlorococcus marinus (strain AS9601).